The chain runs to 212 residues: Protein G1-like7 (212 aa).

Over residues 1 to 22 (MDPSGPGPSSAAAGGAPAVAAA) the composition is skewed to low complexity. Disordered regions lie at residues 1–34 (MDPSGPGPSSAAAGGAPAVAAAPQPPAQLSRYES) and 148–212 (KARG…PSAS). In terms of domain architecture, ALOG spans 31–158 (RYESQKRRDW…ARGIPYEKKK (128 aa)). The Nuclear localization signal signature appears at 156-160 (KKKRK). Positions 167-182 (PAGVEPSGSSSAAAAA) are enriched in low complexity. The segment covering 183-194 (AGGGDAGSGGGA) has biased composition (gly residues). Residues 195 to 212 (AATTTAQPGGSGTAPSAS) show a composition bias toward low complexity.

Belongs to the plant homeotic and developmental regulators ALOG protein family.

It localises to the nucleus. Its function is as follows. Probable transcription regulator that acts as a developmental regulator by promoting cell growth in response to light. In Oryza sativa subsp. japonica (Rice), this protein is Protein G1-like7 (G1L7).